The chain runs to 285 residues: Nucleotide-binding protein PSPPH_4154 (285 aa).

ATP is bound at residue 8–15 (GRSGSGKS). 60 to 63 (DARN) contacts GTP.

Belongs to the RapZ-like family.

In terms of biological role, displays ATPase and GTPase activities. In Pseudomonas savastanoi pv. phaseolicola (strain 1448A / Race 6) (Pseudomonas syringae pv. phaseolicola (strain 1448A / Race 6)), this protein is Nucleotide-binding protein PSPPH_4154.